A 415-amino-acid polypeptide reads, in one-letter code: Probable N-acetyl-gamma-glutamyl-phosphate reductase, chloroplastic (415 aa).

A chloroplast-targeting transit peptide spans 1–74; sequence MGSTALGGGA…SGVKSGEEVR (74 aa). Positions 48–68 are disordered; that stretch reads VRASVASSPQKQHSPKTSGVK. The segment covering 56–67 has biased composition (polar residues); it reads PQKQHSPKTSGV. The active site involves Cys-219.

The protein belongs to the NAGSA dehydrogenase family. Type 1 subfamily. In terms of assembly, homotetramer.

It localises to the plastid. Its subcellular location is the chloroplast. The enzyme catalyses N-acetyl-L-glutamate 5-semialdehyde + phosphate + NADP(+) = N-acetyl-L-glutamyl 5-phosphate + NADPH + H(+). Its pathway is amino-acid biosynthesis; L-arginine biosynthesis; N(2)-acetyl-L-ornithine from L-glutamate: step 3/4. The polypeptide is Probable N-acetyl-gamma-glutamyl-phosphate reductase, chloroplastic (Oryza sativa subsp. japonica (Rice)).